A 212-amino-acid chain; its full sequence is tRNA (guanine-N(7)-)-methyltransferase (212 aa).

S-adenosyl-L-methionine is bound by residues Glu44, Asp69, Asp96, and Asp118. The active site involves Asp118. Lys122 is a binding site for substrate. The interval 124-129 is interaction with RNA; the sequence is RHEKRR. Substrate-binding positions include Asp154 and 191-194; that span reads TEYE.

The protein belongs to the class I-like SAM-binding methyltransferase superfamily. TrmB family.

It catalyses the reaction guanosine(46) in tRNA + S-adenosyl-L-methionine = N(7)-methylguanosine(46) in tRNA + S-adenosyl-L-homocysteine. Its pathway is tRNA modification; N(7)-methylguanine-tRNA biosynthesis. Its function is as follows. Catalyzes the formation of N(7)-methylguanine at position 46 (m7G46) in tRNA. The chain is tRNA (guanine-N(7)-)-methyltransferase from Streptococcus sanguinis (strain SK36).